A 572-amino-acid polypeptide reads, in one-letter code: MNLHQTVEHEAAAAFAAAGIAGSPVVLQPTKNAEHGDFQINGVMGAAKKAKQNPRELAQKVADALAGNAVIESAEVAGPGFINLRLRHEFLAQNIHAALNDARFGVAKTAQPQTVVIDYSSPNLAKEMHVGHLRSSIIGDSISRVLEFTGNTVIRQNHVGDWGTQFGMLVAYLVEQQKDNAAFELADLEQFYRAAKVRFDEDPAFADTAREYVVKLQGGDETVLALWKQFVDISLSHAQAVYDTLGLKLRPEDVAGESKYNDDLQPVADDLVQKGLAVEDDGAKVVFLDEFKNKEGEPAAFIVQKQGGGFLYASTDLACLRYRIGRLKAGRLLYVVDHRQALHFEQLFTTSRKAGYLPENAKAEFIGFGTMMGKDGKPFKTRSGDTVKLVDLLTEAVERATALVKEKNPELGADEAAKIGKTVGIGAVKYADLSKNRTSDYVFDWDAMLSFEGNTAPYLQYAYTRVQSVFRKAGEWDATAPTVLTEPLEKQLAAELLKFENVLQSVADTAYPHYLAAYLYQAATLFSRFYEACPILKAEGASRNSRLQLAKLTGNTLKQGLDLLGIDVLDVM.

Positions 122-132 match the 'HIGH' region motif; the sequence is PNLAKEMHVGH.

This sequence belongs to the class-I aminoacyl-tRNA synthetase family. As to quaternary structure, monomer.

Its subcellular location is the cytoplasm. It carries out the reaction tRNA(Arg) + L-arginine + ATP = L-arginyl-tRNA(Arg) + AMP + diphosphate. This chain is Arginine--tRNA ligase, found in Neisseria gonorrhoeae (strain NCCP11945).